Here is a 248-residue protein sequence, read N- to C-terminus: MALLEICCYSMECALTAQQNGADRVELCAAPKEGGLTPSLGVLKSVRQRVTIPVHPIIRPRGGDFCYSDGEFAAILEDVRTVRELGFPGLVTGVLDVDGNVDMPRMEKIMAAAGPLAVTFHRAFDMCANPLNTLNNLAELGVARVLTSGQKSDALQGLSKIMELIAHGDAPIIMAGAGVRAENLHHFLDAGVLEVHSSAGAWQASPMRYRNQGLSMSSDAHADEYSRYVVDGAAVAEMKGIIERHQAK.

Belongs to the CutC family. Homodimer.

The protein localises to the cytoplasm. The protein is PF03932 family protein CutC of Escherichia coli O7:K1 (strain IAI39 / ExPEC).